A 309-amino-acid polypeptide reads, in one-letter code: Putative HTH-type transcriptional regulatory protein AF_1787 (309 aa).

Positions 131 to 185 constitute an HTH cro/C1-type domain; it reads IREARERLGLSVGDMAKMLGVSRRTVKKYEEGTDTTLSTAAKIEEIIGTFAIKEI. The H-T-H motif DNA-binding region spans 142–161; the sequence is VGDMAKMLGVSRRTVKKYEE.

The sequence is that of Putative HTH-type transcriptional regulatory protein AF_1787 from Archaeoglobus fulgidus (strain ATCC 49558 / DSM 4304 / JCM 9628 / NBRC 100126 / VC-16).